The primary structure comprises 423 residues: UPF0229 protein PSPTO_0546 (423 aa).

A disordered region spans residues 65-110 (HHGRGGKQTVVHPGNKEFTTGEHIARPQGGAGGKGPGKAGNSGEGM). Residues 93-107 (GGAGGKGPGKAGNSG) show a composition bias toward gly residues.

Belongs to the UPF0229 family.

The protein is UPF0229 protein PSPTO_0546 of Pseudomonas syringae pv. tomato (strain ATCC BAA-871 / DC3000).